The sequence spans 652 residues: Phosphoglucomutase 1, chloroplastic (652 aa).

The transit peptide at 1 to 84 (MAFSAAASAS…LAARRTLRVR (84 aa)) directs the protein to the chloroplast. Positions 118 and 211 each coordinate alpha-D-glucose 1,6-bisphosphate. Ser-211 functions as the Phosphoserine intermediate in the catalytic mechanism. Positions 211, 376, 378, and 380 each coordinate Mg(2+). Phosphoserine is present on Ser-211. The alpha-D-glucose 1,6-bisphosphate site is built by Asp-380, Arg-381, Thr-443, Glu-462, Ser-464, and Lys-475.

Belongs to the phosphohexose mutase family. Mg(2+) serves as cofactor.

It localises to the plastid. The protein resides in the chloroplast. The catalysed reaction is alpha-D-glucose 1-phosphate = alpha-D-glucose 6-phosphate. It carries out the reaction O-phospho-L-seryl-[protein] + alpha-D-glucose 1-phosphate = alpha-D-glucose 1,6-bisphosphate + L-seryl-[protein]. The enzyme catalyses alpha-D-glucose 1,6-bisphosphate + L-seryl-[protein] = O-phospho-L-seryl-[protein] + alpha-D-glucose 6-phosphate. Inhibited by the Calvin cycle intermediates fructose-1,6-bisphosphate and ribulose-1,5-bisphosphate. Its function is as follows. Catalyzes the reversible isomerization of alpha-D-glucose 1-phosphate to alpha-D-glucose 6-phosphate. The mechanism proceeds via the intermediate compound alpha-D-glucose 1,6-bisphosphate. This enzyme participates in both the breakdown and synthesis of glucose. Required for sucrose production and accumulation necessary during plant development. Promotes gravitropic responses, negative in shoots but positive in roots, by facilitating starch granules (statoliths) formation. This Marchantia polymorpha (Common liverwort) protein is Phosphoglucomutase 1, chloroplastic.